The chain runs to 747 residues: Sushi domain-containing protein 1 (747 aa).

An N-terminal signal peptide occupies residues 1-29; sequence MGRGPWDAGPSRRLLPLLLLLGLARGAAG. Residues 30–721 lie on the Extracellular side of the membrane; sequence APGPDGLDVC…WAQVKDSSLM (692 aa). Residues 35-72 form the EGF-like 1 domain; it reads GLDVCATCHEHATCQQREGKKICICNYGFVGNGRTQCV. 5 disulfide bridges follow: C39–C48, C42–C57, C59–C71, C77–C91, and C85–C100. The EGF-like 2; calcium-binding domain occupies 73–112; the sequence is DKNECQFGATLVCGNHTSCHNTPGGFYCICLEGYRATNNN. N-linked (GlcNAc...) asparagine glycosylation is found at N87 and N112. Residues 125 to 162 enclose the EGF-like 3; calcium-binding domain; the sequence is DIDECEVSGLCRHGGRCVNTHGSFECYCMDGYLPRNGP. Cystine bridges form between C129–C141, C135–C150, C179–C221, C206–C234, C239–C281, and C266–C294. Sushi domains are found at residues 177–236 and 237–296; these read IDCG…HCQE and INCG…TCTE. N-linked (GlcNAc...) asparagine glycosylation is present at N193. A glycan (N-linked (GlcNAc...) asparagine) is linked at N253. N-linked (GlcNAc...) asparagine glycans are attached at residues N348, N367, and N563. Residues 722-742 traverse the membrane as a helical segment; the sequence is LLQMAGVGLGSLAVVIILTFL. Over 743–747 the chain is Cytoplasmic; that stretch reads SFSAV.

The protein localises to the membrane. The sequence is that of Sushi domain-containing protein 1 (SUSD1) from Homo sapiens (Human).